The following is a 214-amino-acid chain: Adenylate kinase (214 aa).

Residue 10–15 participates in ATP binding; the sequence is GAGKGT. The NMP stretch occupies residues 30-59; the sequence is STGDMLRAAVKAGSELGLKAKEIMDAGKLV. AMP contacts are provided by residues Thr31, Arg36, 57 to 59, 85 to 88, and Gln92; these read KLV and GFPR. An LID region spans residues 122–159; the sequence is GRRVHAASGRVYHVKFNPPKVEDKDDVTGEELTIRKDD. Residues Arg123 and 132 to 133 each bind ATP; that span reads VY. Arg156 and Arg167 together coordinate AMP. Position 200 (Arg200) interacts with ATP.

The protein belongs to the adenylate kinase family. As to quaternary structure, monomer.

It is found in the cytoplasm. It carries out the reaction AMP + ATP = 2 ADP. Its pathway is purine metabolism; AMP biosynthesis via salvage pathway; AMP from ADP: step 1/1. In terms of biological role, catalyzes the reversible transfer of the terminal phosphate group between ATP and AMP. Plays an important role in cellular energy homeostasis and in adenine nucleotide metabolism. This is Adenylate kinase from Yersinia pseudotuberculosis serotype O:1b (strain IP 31758).